The chain runs to 363 residues: tRNA (guanine(26)-N(2))-dimethyltransferase (363 aa).

The 348-residue stretch at 5-352 (VLRREGGVKF…GEYGEVLMAF (348 aa)) folds into the Trm1 methyltransferase domain. The S-adenosyl-L-methionine site is built by Arg-40, Arg-67, Asp-85, Asp-111, and Ala-112.

Belongs to the class I-like SAM-binding methyltransferase superfamily. Trm1 family.

It catalyses the reaction guanosine(26) in tRNA + 2 S-adenosyl-L-methionine = N(2)-dimethylguanosine(26) in tRNA + 2 S-adenosyl-L-homocysteine + 2 H(+). Its function is as follows. Dimethylates a single guanine residue at position 26 of a number of tRNAs using S-adenosyl-L-methionine as donor of the methyl groups. The chain is tRNA (guanine(26)-N(2))-dimethyltransferase from Pyrobaculum aerophilum (strain ATCC 51768 / DSM 7523 / JCM 9630 / CIP 104966 / NBRC 100827 / IM2).